Here is a 637-residue protein sequence, read N- to C-terminus: Sphingomyelin phosphodiesterase B (637 aa).

Residues 1-20 (MKVKAPILLLFVFLINFCFS) form the signal peptide. Asn-73 carries N-linked (GlcNAc...) asparagine glycosylation. In terms of domain architecture, Saposin B-type spans 73–155 (NGTKCDICKF…GFVGFCPYVP (83 aa)). Disulfide bonds link Cys-77/Cys-151, Cys-80/Cys-145, and Cys-108/Cys-119. 2 N-linked (GlcNAc...) asparagine glycosylation sites follow: Asn-128 and Asn-157. The Zn(2+) site is built by Asp-191 and His-193. Cys-212 and Cys-233 form a disulfide bridge. Position 263 (Asp-263) interacts with Zn(2+). N-linked (GlcNAc...) asparagine glycosylation is present at Asn-279. Asn-304 is a binding site for Zn(2+). A glycan (N-linked (GlcNAc...) asparagine) is linked at Asn-377. Zn(2+) contacts are provided by His-407, His-441, and His-443. N-linked (GlcNAc...) asparagine glycosylation is found at Asn-523 and Asn-546. A disulfide bridge links Cys-582 with Cys-595. Asn-606 is a glycosylation site (N-linked (GlcNAc...) asparagine).

Belongs to the acid sphingomyelinase family. It depends on Zn(2+) as a cofactor.

The protein resides in the secreted. Its function is as follows. Converts sphingomyelin to ceramide. The chain is Sphingomyelin phosphodiesterase B (sgmB) from Dictyostelium discoideum (Social amoeba).